Consider the following 251-residue polypeptide: Sugar fermentation stimulation protein homolog (251 aa).

Belongs to the SfsA family.

This chain is Sugar fermentation stimulation protein homolog, found in Symbiobacterium thermophilum (strain DSM 24528 / JCM 14929 / IAM 14863 / T).